A 606-amino-acid polypeptide reads, in one-letter code: Mitogen-activated protein kinase kinase kinase 7 (606 aa).

The interaction with MAPK8IP1 stretch occupies residues 1 to 300; that stretch reads MSTASAASSS…FPGADEPLQY (300 aa). Residues 36–291 enclose the Protein kinase domain; sequence IEVEEVVGRG…KIMTHLMRYF (256 aa). ATP-binding positions include 42–50 and Lys-63; that span reads VGRGAFGVV. Residue Lys-72 forms a Glycyl lysine isopeptide (Lys-Gly) (interchain with G-Cter in ubiquitin) linkage. Asp-156 (proton acceptor) is an active-site residue. A Glycyl lysine isopeptide (Lys-Gly) (interchain with G-Cter in ubiquitin) cross-link involves residue Lys-158. 2 positions are modified to phosphothreonine; by autocatalysis: Thr-184 and Thr-187. Ser-192 is modified (phosphoserine; by autocatalysis). A Glycyl lysine isopeptide (Lys-Gly) (interchain with G-Cter in ubiquitin) cross-link involves residue Lys-209. Disordered regions lie at residues 301–338 and 354–391; these read PCQY…MEQV and KNQA…MSAD. Residues 306 to 338 show a composition bias toward polar residues; the sequence is DEGQSNSATSTGSFMDIASTNTSNKSDTNMEQV. Positions 361–375 are enriched in low complexity; the sequence is SESGRLSLGASRGSS. Phosphoserine is present on residues Ser-367, Ser-389, and Ser-439. Polar residues predominate over residues 443 to 452; the sequence is LTVTGTEPGQ. The segment at 443–493 is disordered; sequence LTVTGTEPGQVSSRSSSPSVRMITTSGPTSEKPTRSHPWTPDDSTDTNGSD. Residues 453–463 show a composition bias toward low complexity; it reads VSSRSSSPSVR. The residue at position 455 (Ser-455) is a Phosphoserine. Over residues 464–473 the composition is skewed to polar residues; it reads MITTSGPTSE.

This sequence belongs to the protein kinase superfamily. STE Ser/Thr protein kinase family. MAP kinase kinase kinase subfamily. In terms of assembly, can form homodimer. Binds both upstream activators and downstream substrates in multimolecular complexes. Interacts with TAB1/MAP3K7IP1, TAB2/MAP3K7IP2 and TAB3/MAP3K7IP3. Identified in the TRIKA2 complex composed of MAP3K7/TAK1, TAB1/MAP3K7IP1 and TAB2/MAP3K7IP2. Interacts with PPM1L and PPM1B/PP2CB. Interaction with PP2A and PPP6C leads to its repressed activity. Interacts with TRAF6 and TAB1/MAP3K7IP1; during IL-1 signaling. Interacts with TAOK1 and TAOK2; interaction with TAOK2 interferes with MAP3K7 interaction with IKKA, thus preventing NF-kappa-B activation. Interacts with DYNC2I2 (via WD domains). Interacts with CYLD and RBCK1. Interacts with TGFBR1; induces MAP3K7/TAK1 activation by TRAF6. Interacts with MAPK8IP1 and SMAD6. Interacts with isoform 1 of VRK2. Interacts with DAB2; the interaction is induced by TGF-beta stimulation and may mediate TGF-beta stimulated JNK activation. Interacts with TRIM5. Part of a complex containing ITCH, NDFIP1 and MAP3K7. Interacts with IFIT5; the interaction synergizes the recruitment of IKK to MAP3K7 and enhances IKK phosphorylation. Interacts with PLEKHM1 (via N- and C-terminus). Found in a complex with SH3RF1, RAC2, MAP2K7/MKK7, MAPK8IP1/JIP1, MAPK8/JNK1 and MAPK9/JNK2. Interacts with SASH1. Interacts with RIPK1. Requires Mg(2+) as cofactor. In terms of processing, association with TAB1/MAP3K7IP1 promotes autophosphorylation at Ser-192 and subsequent activation. Association with TAB2/MAP3K7IP2, itself associated with free unanchored Lys-63 polyubiquitin chain, promotes autophosphorylation and subsequent activation of MAP3K7. Dephosphorylation at Ser-192 by PPM1B/PP2CB and at Thr-187 by PP2A and PPP6C leads to inactivation. Post-translationally, 'Lys-48'-linked polyubiquitination at Lys-72 is induced by TNFalpha, and leads to proteasomal degradation. Undergoes 'Lys-48'-linked polyubiquitination catalyzed by ITCH. 'Lys-63'-linked polyubiquitination at Lys-158 by TRIM8 does not lead to proteasomal degradation but contributes to autophosphorylation and activation. Deubiquitinated by CYLD, a protease that selectively cleaves 'Lys-63'-linked ubiquitin chains. Deubiquitinated by USP19; leading to negative regulation of TNF-alpha- and IL-1beta-triggered NF-kappa-B activation.

The protein localises to the cytoplasm. It is found in the cell membrane. The enzyme catalyses L-seryl-[protein] + ATP = O-phospho-L-seryl-[protein] + ADP + H(+). It catalyses the reaction L-threonyl-[protein] + ATP = O-phospho-L-threonyl-[protein] + ADP + H(+). Activated by pro-inflammatory cytokines and in response to physical and chemical stresses, including osmotic stress, oxidative stress, arsenic and ultraviolet light irradiation. Activated by 'Lys-63'-linked polyubiquitination and by autophosphorylation. Association with TAB1/MAP3K7IP1 and TAB2/MAP3K7IP2 promotes activation through autophosphorylation, whereas PPM1B/PP2CB, PP2A and PPP6C dephosphorylation leads to inactivation. Ceramides are also able to activate MAP3K7/TAK1. Serine/threonine kinase which acts as an essential component of the MAP kinase signal transduction pathway. Plays an important role in the cascades of cellular responses evoked by changes in the environment. Mediates signal transduction of TRAF6, various cytokines including interleukin-1 (IL-1), transforming growth factor-beta (TGFB), TGFB-related factors like BMP2 and BMP4, toll-like receptors (TLR), tumor necrosis factor receptor CD40 and B-cell receptor (BCR). Once activated, acts as an upstream activator of the MKK/JNK signal transduction cascade and the p38 MAPK signal transduction cascade through the phosphorylation and activation of several MAP kinase kinases like MAP2K1/MEK1, MAP2K3/MKK3, MAP2K6/MKK6 and MAP2K7/MKK7. These MAP2Ks in turn activate p38 MAPKs and c-jun N-terminal kinases (JNKs); both p38 MAPK and JNK pathways control the transcription factors activator protein-1 (AP-1). Independently of MAP2Ks and p38 MAPKs, acts as a key activator of NF-kappa-B by promoting activation of the I-kappa-B-kinase (IKK) core complex. Mechanistically, recruited to polyubiquitin chains of RIPK2 and IKBKG/NEMO via TAB2/MAP3K7IP2 and TAB3/MAP3K7IP3, and catalyzes phosphorylation and activation of IKBKB/IKKB component of the IKK complex, leading to NF-kappa-B activation. In osmotic stress signaling, plays a major role in the activation of MAPK8/JNK1, but not that of NF-kappa-B. Promotes TRIM5 capsid-specific restriction activity. Phosphorylates RIPK1 at 'Ser-321' which positively regulates RIPK1 interaction with RIPK3 to promote necroptosis but negatively regulates RIPK1 kinase activity and its interaction with FADD to mediate apoptosis. Phosphorylates STING1 in response to cGAMP-activation, promoting association between STEEP1 and STING1 and STING1 translocation to COPII vesicles. The sequence is that of Mitogen-activated protein kinase kinase kinase 7 (MAP3K7) from Pongo abelii (Sumatran orangutan).